We begin with the raw amino-acid sequence, 338 residues long: Glycerol-3-phosphate dehydrogenase [NAD(P)+] (338 aa).

Positions 13, 14, and 108 each coordinate NADPH. Positions 108, 139, and 141 each coordinate sn-glycerol 3-phosphate. A143 provides a ligand contact to NADPH. Sn-glycerol 3-phosphate is bound by residues K194, D247, S257, R258, and N259. K194 functions as the Proton acceptor in the catalytic mechanism. Position 258 (R258) interacts with NADPH. The NADPH site is built by V282 and E284.

It belongs to the NAD-dependent glycerol-3-phosphate dehydrogenase family.

The protein localises to the cytoplasm. It catalyses the reaction sn-glycerol 3-phosphate + NAD(+) = dihydroxyacetone phosphate + NADH + H(+). It carries out the reaction sn-glycerol 3-phosphate + NADP(+) = dihydroxyacetone phosphate + NADPH + H(+). Its pathway is membrane lipid metabolism; glycerophospholipid metabolism. In terms of biological role, catalyzes the reduction of the glycolytic intermediate dihydroxyacetone phosphate (DHAP) to sn-glycerol 3-phosphate (G3P), the key precursor for phospholipid synthesis. The polypeptide is Glycerol-3-phosphate dehydrogenase [NAD(P)+] (Streptococcus pyogenes serotype M28 (strain MGAS6180)).